A 345-amino-acid polypeptide reads, in one-letter code: Probable deoxyhypusine synthase 2 (345 aa).

Lys-292 acts as the Nucleophile in catalysis.

The protein belongs to the deoxyhypusine synthase family. Requires NAD(+) as cofactor.

It carries out the reaction [eIF5A protein]-L-lysine + spermidine = [eIF5A protein]-deoxyhypusine + propane-1,3-diamine. Its pathway is protein modification; eIF5A hypusination. Functionally, catalyzes the NAD-dependent oxidative cleavage of spermidine and the subsequent transfer of the butylamine moiety of spermidine to the epsilon-amino group of a specific lysine residue of the eIF-5A precursor protein to form the intermediate deoxyhypusine residue. The polypeptide is Probable deoxyhypusine synthase 2 (dys2) (Methanosarcina mazei (strain ATCC BAA-159 / DSM 3647 / Goe1 / Go1 / JCM 11833 / OCM 88) (Methanosarcina frisia)).